The following is a 535-amino-acid chain: Bifunctional purine biosynthesis protein PurH (535 aa).

The region spanning 6–151 (TRLPVRRALI…KNHKDVAIVV (146 aa)) is the MGS-like domain.

It belongs to the PurH family.

It catalyses the reaction (6R)-10-formyltetrahydrofolate + 5-amino-1-(5-phospho-beta-D-ribosyl)imidazole-4-carboxamide = 5-formamido-1-(5-phospho-D-ribosyl)imidazole-4-carboxamide + (6S)-5,6,7,8-tetrahydrofolate. It carries out the reaction IMP + H2O = 5-formamido-1-(5-phospho-D-ribosyl)imidazole-4-carboxamide. It participates in purine metabolism; IMP biosynthesis via de novo pathway; 5-formamido-1-(5-phospho-D-ribosyl)imidazole-4-carboxamide from 5-amino-1-(5-phospho-D-ribosyl)imidazole-4-carboxamide (10-formyl THF route): step 1/1. It functions in the pathway purine metabolism; IMP biosynthesis via de novo pathway; IMP from 5-formamido-1-(5-phospho-D-ribosyl)imidazole-4-carboxamide: step 1/1. This Pseudomonas putida (strain GB-1) protein is Bifunctional purine biosynthesis protein PurH.